A 129-amino-acid polypeptide reads, in one-letter code: Small ribosomal subunit protein uS11 (129 aa).

This sequence belongs to the universal ribosomal protein uS11 family. As to quaternary structure, part of the 30S ribosomal subunit.

In terms of biological role, located on the platform of the 30S subunit. The sequence is that of Small ribosomal subunit protein uS11 from Methanocaldococcus jannaschii (strain ATCC 43067 / DSM 2661 / JAL-1 / JCM 10045 / NBRC 100440) (Methanococcus jannaschii).